A 417-amino-acid polypeptide reads, in one-letter code: Inner membrane transport protein YnfM (417 aa).

Positions 1 to 22 (MSRTTTVDGAPASDTDKQSISQ) are disordered. The Periplasmic segment spans residues 1-38 (MSRTTTVDGAPASDTDKQSISQPNQFIKRGTPQFMRVT). The chain crosses the membrane as a helical span at residues 39 to 59 (LALFSAGLATFALLYCVQPIL). Over 60–73 (PVLSQEFGLTPANS) the chain is Cytoplasmic. Residues 74–94 (SISLSISTAMLAIGLLFTGPL) form a helical membrane-spanning segment. Topologically, residues 95–101 (SDAIGRK) are periplasmic. Residues 102–122 (PVMVTALLLASICTLLSTMMT) traverse the membrane as a helical segment. At 123-125 (SWH) the chain is on the cytoplasmic side. A helical membrane pass occupies residues 126 to 146 (GILIMRALIGLSLSGVAAVGM). Residues 147–152 (TYLSEE) lie on the Periplasmic side of the membrane. The helical transmembrane segment at 153 to 173 (IHPSFVAFSMGLYISGNSIGG) threads the bilayer. Residues 174–190 (MSGRLISGVFTDFFNWR) lie on the Cytoplasmic side of the membrane. A helical transmembrane segment spans residues 191-211 (IALAAIGCFALASALMFWKIL). Residues 212–241 (PESRHFRPTSLRPKTLFINFRLHWRDRGLP) lie on the Periplasmic side of the membrane. Residues 242 to 262 (LLFAEGFLLMGSFVTLFNYIG) form a helical membrane-spanning segment. Over 263–264 (YR) the chain is Cytoplasmic. A helical membrane pass occupies residues 265 to 285 (LMLSPWHVSQAVVGLLSLAYL). Residues 286 to 315 (TGTWSSPKAGTMTTRYGRGPVMLFSTGVML) are Periplasmic-facing. Residues 316–336 (FGLLMTLFSSLWLIFAGMLLF) traverse the membrane as a helical segment. Residues 337–364 (SAGFFAAHSVASSWIGPRAKRAKGQASS) lie on the Cytoplasmic side of the membrane. Residues 365 to 385 (LYLFSYYLGSSIAGTLGGVFW) form a helical membrane-spanning segment. At 386–387 (HN) the chain is on the periplasmic side. The helical transmembrane segment at 388-408 (YGWNGVGAFIALMLVIALLVG) threads the bilayer. At 409 to 417 (TRLHRRLHA) the chain is on the cytoplasmic side.

The protein belongs to the major facilitator superfamily.

The protein localises to the cell inner membrane. This is Inner membrane transport protein YnfM (ynfM) from Escherichia coli (strain K12).